We begin with the raw amino-acid sequence, 198 residues long: Angiopoietin-like protein 8 (198 aa).

The first 21 residues, 1 to 21, serve as a signal peptide directing secretion; sequence MPVPALCLLWALAMVTRPASA.

The protein belongs to the ANGPTL8 family. In terms of assembly, interacts with ANGPTL3. In terms of processing, proteolytically cleaved at the N-terminus. In terms of tissue distribution, predominantly expressed in liver. Also expressed in adipose tissues.

It is found in the secreted. Functionally, hormone that acts as a blood lipid regulator by regulating serum triglyceride levels. May be involved in the metabolic transition between fasting and refeeding: required to direct fatty acids to adipose tissue for storage in the fed state. The polypeptide is Angiopoietin-like protein 8 (Homo sapiens (Human)).